The following is a 32-amino-acid chain: HEERVCPKILMECKKDSDCLAECICLEHGYCG.

Disulfide bonds link C6/C23, C13/C25, and C19/C31.

It belongs to the protease inhibitor I7 (squash-type serine protease inhibitor) family.

The protein resides in the secreted. Inhibits trypsin. The polypeptide is Trypsin inhibitor 3 (Cucurbita pepo (Vegetable marrow)).